Here is a 113-residue protein sequence, read N- to C-terminus: Subtilisin inhibitor-like protein 2 (113 aa).

Cystine bridges form between cysteine 35–cysteine 50 and cysteine 71–cysteine 101.

It belongs to the protease inhibitor I16 (SSI) family. In terms of assembly, homodimer.

The protein localises to the secreted. Functionally, inhibitor of subtilisin BPN' and trypsin. In Streptomyces rochei (Streptomyces parvullus), this protein is Subtilisin inhibitor-like protein 2.